Reading from the N-terminus, the 354-residue chain is Trans-L-3-hydroxyproline dehydratase (354 aa).

The active-site Proton acceptor is the C104. Substrate-binding positions include 105-106 (GH), D269, and 274-275 (GS).

Belongs to the proline racemase family. Homodimer.

It carries out the reaction trans-3-hydroxy-L-proline = 1-pyrroline-2-carboxylate + H2O. Functionally, catalyzes the dehydration of trans-3-hydroxy-L-proline to delta-1-pyrroline-2-carboxylate (Pyr2C). This chain is Trans-L-3-hydroxyproline dehydratase (L3HYPDH), found in Pongo abelii (Sumatran orangutan).